The chain runs to 506 residues: MNTMTLTPGQLSLSQLYDVWRHPVQLRLDASAIDGINASVACVNDIVAEGRTAYGINTGFGLLAQTRIADEDLQNLQRSLVLSHAAGVGDPLDDAMVRLIMVLKINSLARGFSGIRLSVIEALIALVNAGVYPLIPAKGSVGASGDLAPLAHLSLTLLGEGKARWQGEWLPAQTALKKAGLEPVALAAKEGLALLNGTQASTAFALRGLFEAQELFASAVVCGALTTEAVLGSRRPFDARIHAARGQQGQIDVARLFRHLLTDTSAIAESHHHCHKVQDPYSLRCQPQVMGACLTQLRQTKEVLLAEANAVSDNPLVFADAGEVISGGNFHAEPVAMAADNLALAIAEIGALSERRIALMMDKHMSQLPPFLVKNGGVNSGFMIAQVTAAALASENKALAHPHSVDSLPTSANQEDHVSMAPAAGRLLWEMAANTRGIIAVEWLAACQGIDLREGLTSSPLLEQARQTLREQVAHYTQDRFFAPDIECATALLAQGALQRLVPDFM.

Residues alanine 143 to glycine 145 constitute a cross-link (5-imidazolinone (Ala-Gly)). A 2,3-didehydroalanine (Ser) modification is found at serine 144.

Belongs to the PAL/histidase family. In terms of processing, contains an active site 4-methylidene-imidazol-5-one (MIO), which is formed autocatalytically by cyclization and dehydration of residues Ala-Ser-Gly.

Its subcellular location is the cytoplasm. It catalyses the reaction L-histidine = trans-urocanate + NH4(+). It functions in the pathway amino-acid degradation; L-histidine degradation into L-glutamate; N-formimidoyl-L-glutamate from L-histidine: step 1/3. The protein is Histidine ammonia-lyase of Salmonella gallinarum (strain 287/91 / NCTC 13346).